The chain runs to 263 residues: Shikimate dehydrogenase (NADP(+)) (263 aa).

Residues 16–18 (SKS) and threonine 65 contribute to the shikimate site. Lysine 69 serves as the catalytic Proton acceptor. 2 residues coordinate shikimate: asparagine 90 and aspartate 105. Residues 125–129 (GSGGS) and leucine 208 each bind NADP(+). Residue tyrosine 210 participates in shikimate binding. Glycine 230 serves as a coordination point for NADP(+).

This sequence belongs to the shikimate dehydrogenase family. In terms of assembly, homodimer.

The enzyme catalyses shikimate + NADP(+) = 3-dehydroshikimate + NADPH + H(+). It functions in the pathway metabolic intermediate biosynthesis; chorismate biosynthesis; chorismate from D-erythrose 4-phosphate and phosphoenolpyruvate: step 4/7. Inhibited by curcumin, 3-(2-naphthyloxy)-4-oxo-2-(trifluoromethyl)-4H-chromen-7-yl 3-chlorobenzoate, butyl 2-{[3-(2-naphthyloxy)-4-oxo-2-(trifluoromethyl)-4H-chromen-7-yl]oxy}propanoate, 2-({2-[(2-{[2-(2,3-dimethylanilino)-2-oxoethyl]sulfanyl}-1,3-benzothiazol-6-yl)amino]-2-oxoethyl}sulfanyl)-N-(2-naphthyl)acetamide, and maesaquinone diacetate. Its function is as follows. Involved in the biosynthesis of the chorismate, which leads to the biosynthesis of aromatic amino acids. Catalyzes the reversible NADPH linked reduction of 3-dehydroshikimate (DHSA) to yield shikimate (SA). It can also use NAD to oxidize shikimate. In Helicobacter pylori (Campylobacter pylori), this protein is Shikimate dehydrogenase (NADP(+)).